We begin with the raw amino-acid sequence, 290 residues long: uncharacterized protein (290 aa).

The segment at 67-210 is disordered; that stretch reads LPAAPEAPGD…QPSPKNPTKS (144 aa). Positions 121-130 are enriched in basic and acidic residues; that stretch reads RPQETQEGHR. Low complexity predominate over residues 181–190; sequence AAQAAAAATA. Positions 191-200 are enriched in polar residues; the sequence is NPGSQTQTPL.

This is an uncharacterized protein from Homo sapiens (Human).